A 115-amino-acid chain; its full sequence is MARVKNGIVHVARRKRILKKTKGFWGTKKSNYKKAKDTLRKGMMYATRDRKTRKRDLRSLWIVRISAALTGMGINYSRFFEGLRKLNIKLNRKILSNLAIEDIESFKKIVYEIKN.

This sequence belongs to the bacterial ribosomal protein bL20 family.

Its function is as follows. Binds directly to 23S ribosomal RNA and is necessary for the in vitro assembly process of the 50S ribosomal subunit. It is not involved in the protein synthesizing functions of that subunit. The polypeptide is Large ribosomal subunit protein bL20 (Borrelia duttonii (strain Ly)).